The chain runs to 720 residues: Phosphoribosylformylglycinamidine synthase subunit PurL (720 aa).

His34 is a catalytic residue. Tyr37 is a binding site for ATP. Glu83 contacts Mg(2+). Residues 84–87 (SHNH) and Arg106 contribute to the substrate site. His85 (proton acceptor) is an active-site residue. Asp107 contributes to the Mg(2+) binding site. A substrate-binding site is contributed by Gln231. Asp259 lines the Mg(2+) pocket. 303-305 (ESQ) lines the substrate pocket. ATP contacts are provided by Asp480 and Gly517. Asn518 is a binding site for Mg(2+). Substrate is bound at residue Ser520.

It belongs to the FGAMS family. In terms of assembly, monomer. Part of the FGAM synthase complex composed of 1 PurL, 1 PurQ and 2 PurS subunits.

The protein resides in the cytoplasm. It catalyses the reaction N(2)-formyl-N(1)-(5-phospho-beta-D-ribosyl)glycinamide + L-glutamine + ATP + H2O = 2-formamido-N(1)-(5-O-phospho-beta-D-ribosyl)acetamidine + L-glutamate + ADP + phosphate + H(+). It functions in the pathway purine metabolism; IMP biosynthesis via de novo pathway; 5-amino-1-(5-phospho-D-ribosyl)imidazole from N(2)-formyl-N(1)-(5-phospho-D-ribosyl)glycinamide: step 1/2. Part of the phosphoribosylformylglycinamidine synthase complex involved in the purines biosynthetic pathway. Catalyzes the ATP-dependent conversion of formylglycinamide ribonucleotide (FGAR) and glutamine to yield formylglycinamidine ribonucleotide (FGAM) and glutamate. The FGAM synthase complex is composed of three subunits. PurQ produces an ammonia molecule by converting glutamine to glutamate. PurL transfers the ammonia molecule to FGAR to form FGAM in an ATP-dependent manner. PurS interacts with PurQ and PurL and is thought to assist in the transfer of the ammonia molecule from PurQ to PurL. This is Phosphoribosylformylglycinamidine synthase subunit PurL from Haloarcula marismortui (strain ATCC 43049 / DSM 3752 / JCM 8966 / VKM B-1809) (Halobacterium marismortui).